The sequence spans 150 residues: 3-dehydroquinate dehydratase (150 aa).

Tyr-22 acts as the Proton acceptor in catalysis. Residues Asn-73, His-79, and Asp-86 each contribute to the substrate site. The active-site Proton donor is His-99. Residues 100–101 (LS) and Arg-110 contribute to the substrate site.

The protein belongs to the type-II 3-dehydroquinase family. In terms of assembly, homododecamer.

The enzyme catalyses 3-dehydroquinate = 3-dehydroshikimate + H2O. Its pathway is metabolic intermediate biosynthesis; chorismate biosynthesis; chorismate from D-erythrose 4-phosphate and phosphoenolpyruvate: step 3/7. Catalyzes a trans-dehydration via an enolate intermediate. This Dinoroseobacter shibae (strain DSM 16493 / NCIMB 14021 / DFL 12) protein is 3-dehydroquinate dehydratase.